The sequence spans 200 residues: Snake venom metalloproteinase BmooMP-I (200 aa).

Residues 5-200 form the Peptidase M12B domain; it reads RYIELAVVAD…HNPQCILNEP (196 aa). The Ca(2+) site is built by E8 and D92. Disulfide bonds link C116–C195, C155–C179, and C157–C162. H141 is a binding site for Zn(2+). The active site involves E142. Zn(2+) is bound by residues H145 and H151. Ca(2+) is bound by residues C195 and N198.

It belongs to the venom metalloproteinase (M12B) family. P-I subfamily. In terms of assembly, monomer. Requires Zn(2+) as cofactor. In terms of tissue distribution, expressed by the venom gland.

The protein localises to the secreted. Functionally, zinc metalloprotease that displays fibrinogenolytic, gelatinase and weak hemorrhagic activities. Degrades the three chain of fibrinogen Aalpha-chain (FGA), Bbeta-chain (FGB), and gamma (FGG). This chain is Snake venom metalloproteinase BmooMP-I, found in Bothrops moojeni (Lance-headed viper).